Reading from the N-terminus, the 260-residue chain is Ava biosynthesis cluster protein M (260 aa).

A signal peptide spans 1-15; sequence MKVLVLGLCRTGTSS.

It belongs to the cytochrome P450 family.

It functions in the pathway secondary metabolite biosynthesis. In terms of biological role, part of the cluster that mediates the biosynthesis of a highly modified cyclo-arginine-tryptophan dipeptide (cRW). The first step of the pathway is perfornmed by the arginine-containing cyclodipeptide synthase (RCPDS) avaA that acts as the scaffold-generating enzyme and is responsible for formation of the cyclo-Arg-Trp (cRW) diketopiperazine. AvaB then acts as a multifunctional flavoenzyme that is responsible for generating the cyclo-Arg-formylkynurenine DKP, which can be deformylated by avaC. AvaB then further catalyzes an additional N-oxidation followed by cyclization and dehydration. The next step is an N-acetylation of the guanidine group catalyzed by the arginine N-acetyltransferase avaD. The roles of the additional enzymes identified within the ava cluster still have to be determined. The protein is Ava biosynthesis cluster protein M of Aspergillus versicolor.